The primary structure comprises 794 residues: Protein argonaute-4 (794 aa).

The 120-residue stretch at 152-271 (PIIEFMCEVL…LPLEVCNIVA (120 aa)) folds into the PAZ domain. The Piwi domain maps to 442–753 (LIVVILPGKT…VAFRARYHLV (312 aa)). The segment at 758–779 (DSAEGSHVSGQSNGRDPQALAK) is disordered.

This sequence belongs to the argonaute family. Ago subfamily.

The protein resides in the cytoplasm. It is found in the P-body. In terms of biological role, required for RNA-mediated gene silencing (RNAi). Binds to short RNAs such as microRNAs (miRNAs) and represses the translation of mRNAs which are complementary to them. Lacks endonuclease activity and does not appear to cleave target mRNAs. The chain is Protein argonaute-4 (AGO4) from Gallus gallus (Chicken).